The sequence spans 169 residues: Crossover junction endodeoxyribonuclease RuvC (169 aa).

Active-site residues include Asp-12, Glu-72, and Asp-144. 3 residues coordinate Mg(2+): Asp-12, Glu-72, and Asp-144.

Belongs to the RuvC family. Homodimer which binds Holliday junction (HJ) DNA. The HJ becomes 2-fold symmetrical on binding to RuvC with unstacked arms; it has a different conformation from HJ DNA in complex with RuvA. In the full resolvosome a probable DNA-RuvA(4)-RuvB(12)-RuvC(2) complex forms which resolves the HJ. Requires Mg(2+) as cofactor.

It localises to the cytoplasm. The catalysed reaction is Endonucleolytic cleavage at a junction such as a reciprocal single-stranded crossover between two homologous DNA duplexes (Holliday junction).. In terms of biological role, the RuvA-RuvB-RuvC complex processes Holliday junction (HJ) DNA during genetic recombination and DNA repair. Endonuclease that resolves HJ intermediates. Cleaves cruciform DNA by making single-stranded nicks across the HJ at symmetrical positions within the homologous arms, yielding a 5'-phosphate and a 3'-hydroxyl group; requires a central core of homology in the junction. The consensus cleavage sequence is 5'-(A/T)TT(C/G)-3'. Cleavage occurs on the 3'-side of the TT dinucleotide at the point of strand exchange. HJ branch migration catalyzed by RuvA-RuvB allows RuvC to scan DNA until it finds its consensus sequence, where it cleaves and resolves the cruciform DNA. The protein is Crossover junction endodeoxyribonuclease RuvC of Xanthobacter autotrophicus (strain ATCC BAA-1158 / Py2).